Consider the following 88-residue polypeptide: MEGITGKELILAASAIGAGLAMIAGLGPGIGQGIAAGKGAEAVGRQPEAQGDILRTMLLGQAVAETTGIYSLVIALILLFANPLIRLL.

The next 2 helical transmembrane spans lie at 10-30 and 68-88; these read ILAA…GPGI and GIYS…IRLL.

Belongs to the ATPase C chain family. In terms of assembly, F-type ATPases have 2 components, F(1) - the catalytic core - and F(0) - the membrane proton channel. F(1) has five subunits: alpha(3), beta(3), gamma(1), delta(1), epsilon(1). F(0) has three main subunits: a(1), b(2) and c(10-14). The alpha and beta chains form an alternating ring which encloses part of the gamma chain. F(1) is attached to F(0) by a central stalk formed by the gamma and epsilon chains, while a peripheral stalk is formed by the delta and b chains.

The protein resides in the cell membrane. Functionally, f(1)F(0) ATP synthase produces ATP from ADP in the presence of a proton or sodium gradient. F-type ATPases consist of two structural domains, F(1) containing the extramembraneous catalytic core and F(0) containing the membrane proton channel, linked together by a central stalk and a peripheral stalk. During catalysis, ATP synthesis in the catalytic domain of F(1) is coupled via a rotary mechanism of the central stalk subunits to proton translocation. Its function is as follows. Key component of the F(0) channel; it plays a direct role in translocation across the membrane. A homomeric c-ring of between 10-14 subunits forms the central stalk rotor element with the F(1) delta and epsilon subunits. This is ATP synthase subunit c from Alkaliphilus oremlandii (strain OhILAs) (Clostridium oremlandii (strain OhILAs)).